A 192-amino-acid polypeptide reads, in one-letter code: Leucyl/phenylalanyl-tRNA--protein transferase (192 aa).

This sequence belongs to the L/F-transferase family.

The protein resides in the cytoplasm. The catalysed reaction is N-terminal L-lysyl-[protein] + L-leucyl-tRNA(Leu) = N-terminal L-leucyl-L-lysyl-[protein] + tRNA(Leu) + H(+). It catalyses the reaction N-terminal L-arginyl-[protein] + L-leucyl-tRNA(Leu) = N-terminal L-leucyl-L-arginyl-[protein] + tRNA(Leu) + H(+). It carries out the reaction L-phenylalanyl-tRNA(Phe) + an N-terminal L-alpha-aminoacyl-[protein] = an N-terminal L-phenylalanyl-L-alpha-aminoacyl-[protein] + tRNA(Phe). Functions in the N-end rule pathway of protein degradation where it conjugates Leu, Phe and, less efficiently, Met from aminoacyl-tRNAs to the N-termini of proteins containing an N-terminal arginine or lysine. The chain is Leucyl/phenylalanyl-tRNA--protein transferase from Synechococcus sp. (strain JA-3-3Ab) (Cyanobacteria bacterium Yellowstone A-Prime).